We begin with the raw amino-acid sequence, 200 residues long: Probable GTP-binding protein EngB (200 aa).

Residues 22–194 (TLPEVAFVGR…WKEVLRLTLA (173 aa)) form the EngB-type G domain. GTP is bound by residues 30-37 (GRSNVGKS), 57-61 (GRTQL), 75-78 (DLPG), 142-145 (TKCD), and 173-175 (FSA). Residues serine 37 and threonine 59 each contribute to the Mg(2+) site.

Belongs to the TRAFAC class TrmE-Era-EngA-EngB-Septin-like GTPase superfamily. EngB GTPase family. Mg(2+) serves as cofactor.

Functionally, necessary for normal cell division and for the maintenance of normal septation. This Pelobacter propionicus (strain DSM 2379 / NBRC 103807 / OttBd1) protein is Probable GTP-binding protein EngB.